We begin with the raw amino-acid sequence, 585 residues long: Potassium-transporting ATPase potassium-binding subunit (585 aa).

12 helical membrane passes run 25–45, 84–104, 152–172, 194–214, 275–295, 307–327, 345–365, 368–388, 397–417, 437–457, 502–522, and 547–567; these read IIIF…SFYI, YFIN…LVIM, FVIT…SMAF, IFDL…LAGV, LEFV…GIVF, VIMF…YVGV, AIGV…STGA, GALV…LLLN, GVLN…LMVG, LSLV…LMIP, LDGV…LVIA, and LLLI…IIVL.

The protein belongs to the KdpA family. The system is composed of three essential subunits: KdpA, KdpB and KdpC.

It localises to the cell membrane. Part of the high-affinity ATP-driven potassium transport (or Kdp) system, which catalyzes the hydrolysis of ATP coupled with the electrogenic transport of potassium into the cytoplasm. This subunit binds the extracellular potassium ions and delivers the ions to the membrane domain of KdpB through an intramembrane tunnel. This Thermoplasma volcanium (strain ATCC 51530 / DSM 4299 / JCM 9571 / NBRC 15438 / GSS1) protein is Potassium-transporting ATPase potassium-binding subunit.